We begin with the raw amino-acid sequence, 333 residues long: MNLYRRYGWELTLAALLVLEILLFGLSNSRMLDINVLLFSTSDFICIGIVALPLTMVIVSGGIDISFGSTIGLCAIFLGIVFQAGVPMSVAIPLTVLIGALCGLINAGLILYTGVNPLVITLGTLYLFGGSALLLSGLSGATGYEGIGGFPAAFTDFANQTLFGLPIPLVIFMLCVLLFWLLMHRTHSGRHVFLIGQSSRVARYSALPIARTLCMLYAMTGVASAIAAILLVSYFGSARSDLGASFLMPAITAVVLGGANIYGGSGSILGTALAVLLVGYLQQGLQMIGTPNQISSALSGALLILVVVGRSISLHRHLIYEWLQRRRSRKASA.

The next 10 membrane-spanning stretches (helical) occupy residues 7–27 (YGWE…FGLS), 45–65 (ICIG…GIDI), 67–87 (FGST…AGVP), 90–110 (VAIP…AGLI), 118–138 (LVIT…LSGL), 162–182 (LFGL…FWLL), 212–232 (TLCM…ILLV), 240–260 (SDLG…GGAN), 261–281 (IYGG…VGYL), and 288–308 (IGTP…LVVV).

It belongs to the binding-protein-dependent transport system permease family. AraH/RbsC subfamily. The complex is composed of two ATP-binding proteins (LsrA), two transmembrane proteins (LsrC and LsrD) and a solute-binding protein (LsrB).

It localises to the cell inner membrane. Functionally, part of the ABC transporter complex LsrABCD involved in autoinducer 2 (AI-2) import. Probably responsible for the translocation of the substrate across the membrane. The sequence is that of Autoinducer 2 import system permease protein LsrD (lsrD) from Yersinia pseudotuberculosis serotype O:1b (strain IP 31758).